The following is a 537-amino-acid chain: Exodeoxyribonuclease 7 large subunit (537 aa).

The tract at residues 508 to 537 (GEGAPVEPPQAARPSKGARTKAAQPSLFDD) is disordered.

This sequence belongs to the XseA family. In terms of assembly, heterooligomer composed of large and small subunits.

It is found in the cytoplasm. It catalyses the reaction Exonucleolytic cleavage in either 5'- to 3'- or 3'- to 5'-direction to yield nucleoside 5'-phosphates.. In terms of biological role, bidirectionally degrades single-stranded DNA into large acid-insoluble oligonucleotides, which are then degraded further into small acid-soluble oligonucleotides. This is Exodeoxyribonuclease 7 large subunit from Azorhizobium caulinodans (strain ATCC 43989 / DSM 5975 / JCM 20966 / LMG 6465 / NBRC 14845 / NCIMB 13405 / ORS 571).